Reading from the N-terminus, the 830-residue chain is Frameshifted structural polyprotein (830 aa).

A disordered region spans residues 58-109 (AIAPARPPKPKKKKTTKPKPKTQPKKINGKTQQQKKKDKQADKKKKKPGKRE). Residues 65-107 (PKPKKKKTTKPKPKTQPKKINGKTQQQKKKDKQADKKKKKPGK) are compositionally biased toward basic residues. Residues 94–106 (KDKQADKKKKKPG) are ribosome-binding. A disulfide bond links cysteine 119 and cysteine 134. Positions 119–267 (CIFEVKHEGK…RVTPEGSEEW (149 aa)) constitute a Peptidase S3 domain. Residues histidine 145, aspartate 167, and serine 219 each act as charge relay system in the active site. N-linked (GlcNAc...) asparagine; by host glycosylation is found at asparagine 280, asparagine 327, asparagine 533, and asparagine 595. Residues 702–722 (AVVGMSLLALISIFASCYMLV) traverse the membrane as a helical segment. 4 S-palmitoyl cysteine; by host lipidation sites follow: cysteine 718, cysteine 728, cysteine 748, and cysteine 749. Positions 728 to 748 (CLTPYALTPGAAVPWTLGILC) are transient transmembrane before p62-6K protein processing. 2 helical membrane passes run 771–791 (ALFW…TYCL) and 793–813 (NVLC…RGHR).

Homodimer. Homomultimer. Interacts with host karyopherin KPNA4; this interaction allows the nuclear import of the viral capsid protein. Precursor of protein E3/E2: The precursor of protein E3/E2 and E1 form a heterodimer shortly after synthesis. Interacts with host IRAK1; the interaction leads to inhibition of IRAK1-dependent signaling. As to quaternary structure, processing of the precursor of protein E3/E2 into E2 and E3 results in a heterodimer of the spike glycoproteins E2 and E1. Spike at virion surface are constituted of three E2-E1 heterodimers. Interacts with 6K protein. Interacts with host MXRA8; this interaction mediates virus entry. Specific enzymatic cleavages in vivo yield mature proteins. Capsid protein is auto-cleaved during polyprotein translation, unmasking a signal peptide at the N-terminus of the precursor of E3/E2. The remaining polyprotein is then targeted to the host endoplasmic reticulum, where host signal peptidase cleaves it into pE2 and TF. pE2 is further processed to mature E3 and E2 by host furin in trans-Golgi vesicle.

The protein resides in the virion. The protein localises to the host cytoplasm. It localises to the host cell membrane. Its subcellular location is the host nucleus. It is found in the virion membrane. The enzyme catalyses Autocatalytic release of the core protein from the N-terminus of the togavirus structural polyprotein by hydrolysis of a -Trp-|-Ser- bond.. In terms of biological role, forms an icosahedral capsid with a T=4 symmetry composed of 240 copies of the capsid protein surrounded by a lipid membrane through which penetrate 80 spikes composed of trimers of E1-E2 heterodimers. The capsid protein binds to the viral RNA genome at a site adjacent to a ribosome binding site for viral genome translation following genome release. Possesses a protease activity that results in its autocatalytic cleavage from the nascent structural protein. Following its self-cleavage, the capsid protein transiently associates with ribosomes, and within several minutes the protein binds to viral RNA and rapidly assembles into icosahedric core particles. The resulting nucleocapsid eventually associates with the cytoplasmic domain of the spike glycoprotein E2 at the cell membrane, leading to budding and formation of mature virions. In case of infection, new virions attach to target cells and after clathrin-mediated endocytosis their membrane fuses with the host endosomal membrane. This leads to the release of the nucleocapsid into the cytoplasm, followed by an uncoating event necessary for the genomic RNA to become accessible. The uncoating might be triggered by the interaction of capsid proteins with ribosomes. Binding of ribosomes would release the genomic RNA since the same region is genomic RNA-binding and ribosome-binding. Specifically inhibits interleukin-1 receptor-associated kinase 1/IRAK1-dependent signaling during viral entry, representing a means by which the alphaviruses may evade innate immune detection and activation prior to viral gene expression. Provides the signal sequence for p62 (E3/E2) translocation to the host endoplasmic reticulum. Mediates pH protection of E1 during secretory pathway trans- port. Its function is as follows. Plays a role in viral attachment to target host cell, by binding to the cell receptor. Synthesized as a p62 precursor which is processed by furin at the cell membrane just before virion budding, giving rise to E2-E1 heterodimer. The p62-E1 heterodimer is stable, whereas E2-E1 is unstable and dissociate at low pH. p62 is processed at the last step, presumably to avoid E1 fusion activation before its final export to cell surface. E2 C-terminus contains a transitory transmembrane that would be disrupted by palmitoylation, resulting in reorientation of the C-terminal tail from lumenal to cytoplasmic side. This step is critical since E2 C-terminus is involved in budding by interacting with capsid proteins. This release of E2 C-terminus in cytoplasm occurs lately in protein export, and precludes premature assembly of particles at the endoplasmic reticulum membrane. Functionally, virion component that may play a role during viral assembly. This Aedes (Middle-African hedgehog) protein is Frameshifted structural polyprotein.